A 572-amino-acid polypeptide reads, in one-letter code: Proline--tRNA ligase (572 aa).

Belongs to the class-II aminoacyl-tRNA synthetase family. ProS type 1 subfamily. In terms of assembly, homodimer.

The protein resides in the cytoplasm. It catalyses the reaction tRNA(Pro) + L-proline + ATP = L-prolyl-tRNA(Pro) + AMP + diphosphate. Functionally, catalyzes the attachment of proline to tRNA(Pro) in a two-step reaction: proline is first activated by ATP to form Pro-AMP and then transferred to the acceptor end of tRNA(Pro). As ProRS can inadvertently accommodate and process non-cognate amino acids such as alanine and cysteine, to avoid such errors it has two additional distinct editing activities against alanine. One activity is designated as 'pretransfer' editing and involves the tRNA(Pro)-independent hydrolysis of activated Ala-AMP. The other activity is designated 'posttransfer' editing and involves deacylation of mischarged Ala-tRNA(Pro). The misacylated Cys-tRNA(Pro) is not edited by ProRS. The chain is Proline--tRNA ligase from Citrobacter koseri (strain ATCC BAA-895 / CDC 4225-83 / SGSC4696).